The primary structure comprises 200 residues: Probable nicotinate-nucleotide adenylyltransferase (200 aa).

The protein belongs to the NadD family.

It carries out the reaction nicotinate beta-D-ribonucleotide + ATP + H(+) = deamido-NAD(+) + diphosphate. It participates in cofactor biosynthesis; NAD(+) biosynthesis; deamido-NAD(+) from nicotinate D-ribonucleotide: step 1/1. Its function is as follows. Catalyzes the reversible adenylation of nicotinate mononucleotide (NaMN) to nicotinic acid adenine dinucleotide (NaAD). The chain is Probable nicotinate-nucleotide adenylyltransferase from Leifsonia xyli subsp. xyli (strain CTCB07).